The primary structure comprises 301 residues: GTP cyclohydrolase FolE2 (301 aa).

The protein belongs to the GTP cyclohydrolase IV family.

The enzyme catalyses GTP + H2O = 7,8-dihydroneopterin 3'-triphosphate + formate + H(+). It participates in cofactor biosynthesis; 7,8-dihydroneopterin triphosphate biosynthesis; 7,8-dihydroneopterin triphosphate from GTP: step 1/1. In terms of biological role, converts GTP to 7,8-dihydroneopterin triphosphate. This chain is GTP cyclohydrolase FolE2, found in Exiguobacterium sibiricum (strain DSM 17290 / CCUG 55495 / CIP 109462 / JCM 13490 / 255-15).